The chain runs to 910 residues: MAEGFVSFGLEKLWDLLSRESERLQGIDEQLDGLKRQLRSLQSLLKDADAKKHGSDRVRNFLEDVKDLVFDAEDIIESYVLNKLRGEGKGVKKHVRRLARFLTDRHKVASDIEGITKRISEVIGEMQSFGIQQIIDGGRSLSLQERQRVQREIRQTYPDSSESDLVGVEQSVTELVCHLVENDVHQVVSIAGMGGIGKTTLARQVFHHDLVRRHFDGFAWVCVSQQFTQKHVWQRILQELQPHDGEILQMDEYTIQGKLFQLLETGRYLVVLDDVWKKEDWDRIKAVFPRKRGWKMLLTSRNEGVGIHADPTCLTFRASILNPEESWKLCERIVFPRRDETEVRLDEEMEAMGKEMVTHCGGLPLAVKALGGLLANKHTVPEWKRVSDNIGSQIVGGSCLDDNSLNSVYRILSLSYEDLPTHLKHCFLHLAHYPEDSKIYTQDLFNYWAAEGIYDGSTIQDSGEYYLEELVRRNLVIADNRYLISEFKIKNCQMHDMMREVCLSKAKEENFLQIIKDPTCTSTINAQSPSRSRRLSIHSGKAFHILGHKRNAKVRSLIVSRFEEDFWIRSASVFHNLTLLRVLDLSWVKFEGGKLPCSIGGLIHLRYLRLYGAVVSHLPSTMRNLKLLLYLNLSVHNEDLIHVPNVLKEMIELRYLSIPVKMDDKTKLELGDLVNLEYLYGFSTQHTSVTDLLRMTKLRNLTVSLSERYNFKTLSSSLRELRNLETLYVLFSRKTYMVDHMGEFVLDHFIHLKELGLVVRMSKIPDQHQFPPHLVHIFLFYCGMEEDPMPILEKLHHLKSVQLRYKAFVGRRMVCSKDGFTQLCALDISKQSELEDWIVEEGSMPCLRTLTIHDCEKLKELPDGLKYITSLKELKIEGMKREWKEKLVPGGEDYYKVQHIPDVQFINCDQ.

The stretch at 15-57 forms a coiled coil; sequence DLLSRESERLQGIDEQLDGLKRQLRSLQSLLKDADAKKHGSDR. One can recognise an NB-ARC domain in the interval 146 to 459; sequence RQRVQREIRQ…AEGIYDGSTI (314 aa). 192 to 199 serves as a coordination point for ATP; sequence GMGGIGKT.

It belongs to the disease resistance NB-LRR family. RPP8/HRT subfamily.

Disease resistance protein. Resistance proteins guard the plant against pathogens that contain an appropriate avirulence protein via an indirect interaction with this avirulence protein. That triggers a defense system including the hypersensitive response, which restricts the pathogen growth. In contrast to RPP8, it does not specifically recognize the Emco5 avirulence protein from Hyaloperonospora parasitica. The protein is Disease resistance protein RPH8A (RPH8A) of Arabidopsis thaliana (Mouse-ear cress).